Reading from the N-terminus, the 483-residue chain is Glutamyl-tRNA(Gln) amidotransferase subunit A (483 aa).

Residues Lys-75 and Ser-150 each act as charge relay system in the active site. Residue Ser-174 is the Acyl-ester intermediate of the active site.

This sequence belongs to the amidase family. GatA subfamily. Heterotrimer of A, B and C subunits.

It carries out the reaction L-glutamyl-tRNA(Gln) + L-glutamine + ATP + H2O = L-glutaminyl-tRNA(Gln) + L-glutamate + ADP + phosphate + H(+). Its function is as follows. Allows the formation of correctly charged Gln-tRNA(Gln) through the transamidation of misacylated Glu-tRNA(Gln) in organisms which lack glutaminyl-tRNA synthetase. The reaction takes place in the presence of glutamine and ATP through an activated gamma-phospho-Glu-tRNA(Gln). This is Glutamyl-tRNA(Gln) amidotransferase subunit A from Legionella pneumophila (strain Paris).